A 922-amino-acid polypeptide reads, in one-letter code: Coronin-7 (922 aa).

WD repeat units lie at residues 75–115 (CHSD…EALP), 124–163 (PEEL…PLTE), 166–205 (AHKD…QASQ), and 209–253 (AHEN…SALA). Positions 419–467 (DTDLSEGFSSPSSLMSPSTPSSLGPSLSSTSGIGTSPSQRSLQSLLGPS) are disordered. Low complexity predominate over residues 427 to 456 (SSPSSLMSPSTPSSLGPSLSSTSGIGTSPS). A phosphoserine mark is found at serine 459 and serine 462. A Glycyl lysine isopeptide (Lys-Gly) (interchain with G-Cter in ubiquitin) cross-link involves residue lysine 469. 4 WD repeats span residues 539-581 (QNGT…NVLT), 589-629 (GHTE…ERLK), 632-671 (GHQD…LPLQ), and 725-765 (DVAP…PFFL). Residues 858 to 922 (GMTPVSQAPR…FEGVDEDEWD (65 aa)) form a disordered region. Basic and acidic residues predominate over residues 881–893 (LEEKSDQQKKEEL). Serine 912 is subject to Phosphoserine.

Belongs to the WD repeat coronin family. In terms of assembly, interacts with clathrin adapter AP1 complex. This interaction takes place at Golgi membranes and not AP1-positive endosomal membranes. Interacts (when ubiquitinated at Lys-469) with EPS15. In terms of processing, the membrane-associated form is phosphorylated on tyrosine residues. Ubiquitinated via 'Lys-33'-linked ubiquitin chains by the BCR(KLHL20) E3 ubiquitin ligase complex: 'Lys-33'-linked ubiquitination promotes interaction with EPS15 and facilitates actin polymerization at the trans-Golgi network, thereby facilitating post-Golgi trafficking. Deubiquitinated by ZRANB1/TRABID. As to expression, in the adult, widely expressed with highest levels in brain, thymus and kidney and low levels in skeletal and heart muscle. Not expressed in lung. In the eye, strongly expressed in the outer plexiform layer of the retina. In the intestine, expressed both in terminally differentiated epithelial cells and in crypt epithelium. In the embryo, strongest expression is seen in brain, thymus, intestine, apical epidermal layers of the skin and developing lens fibers of the eye.

It localises to the golgi apparatus membrane. Its subcellular location is the golgi apparatus. The protein resides in the trans-Golgi network. It is found in the cytoplasmic vesicle. The protein localises to the cytoplasm. It localises to the cytosol. Functionally, F-actin regulator involved in anterograde Golgi to endosome transport: upon ubiquitination via 'Lys-33'-linked ubiquitin chains by the BCR(KLHL20) E3 ubiquitin ligase complex, interacts with EPS15 and localizes to the trans-Golgi network, where it promotes actin polymerization, thereby facilitating post-Golgi trafficking. May play a role in the maintenance of the Golgi apparatus morphology. The chain is Coronin-7 (Coro7) from Mus musculus (Mouse).